We begin with the raw amino-acid sequence, 266 residues long: Putative carbamate hydrolase RutD (266 aa).

The protein belongs to the AB hydrolase superfamily. Hydrolase RutD family.

The enzyme catalyses carbamate + 2 H(+) = NH4(+) + CO2. Its function is as follows. Involved in pyrimidine catabolism. May facilitate the hydrolysis of carbamate, a reaction that can also occur spontaneously. This is Putative carbamate hydrolase RutD from Enterobacter cloacae subsp. cloacae (strain ATCC 13047 / DSM 30054 / NBRC 13535 / NCTC 10005 / WDCM 00083 / NCDC 279-56).